The following is a 198-amino-acid chain: dITP/XTP pyrophosphatase (198 aa).

Position 7–12 (7–12) interacts with substrate; the sequence is THNPHK. Mg(2+) is bound by residues E40 and D69. D69 (proton acceptor) is an active-site residue. Substrate-binding positions include T70, 151–154, K174, and 179–180; these read FGYD and HR.

This sequence belongs to the HAM1 NTPase family. Homodimer. It depends on Mg(2+) as a cofactor.

The catalysed reaction is XTP + H2O = XMP + diphosphate + H(+). It catalyses the reaction dITP + H2O = dIMP + diphosphate + H(+). It carries out the reaction ITP + H2O = IMP + diphosphate + H(+). Its function is as follows. Pyrophosphatase that catalyzes the hydrolysis of nucleoside triphosphates to their monophosphate derivatives, with a high preference for the non-canonical purine nucleotides XTP (xanthosine triphosphate), dITP (deoxyinosine triphosphate) and ITP. Seems to function as a house-cleaning enzyme that removes non-canonical purine nucleotides from the nucleotide pool, thus preventing their incorporation into DNA/RNA and avoiding chromosomal lesions. The protein is dITP/XTP pyrophosphatase of Thermoanaerobacter pseudethanolicus (strain ATCC 33223 / 39E) (Clostridium thermohydrosulfuricum).